A 325-amino-acid chain; its full sequence is MKPILLQGHERSITQIKYNREGDLLFTVAKDPIVNVWYSVNGERLGTYNGHTGAVWCVDADWDTRHVLTGSADNSCRLWDCETGKQLALVKTSSAVRTCGFDFGGNIIMFSTDKQMGYQCFVSFFDLRDPSQIENNEPYMKIPCSDSKITSAVWGPLGEFIIAGHENGELNQFSAKSGEQLSNIKEHTKQINDIQTSRDMTMFITASKDNTAKLFDCTSLKHLKTFRTERPVNSAALSPIFDHVVLGGGQEAMDVTTTSTRIGKFEARFFHLAFEEEFGRVKGHFGPINSVAFHPDGKSYSSGGEDGYVRIHYFDPQYFEFEFEA.

WD repeat units follow at residues 8–47, 50–89, 144–183, 186–225, and 283–324; these read GHER…RLGT, GHTG…QLAL, CSDS…QLSN, EHTK…HLKT, and GHFG…FEFE.

Belongs to the eIF-3 subunit I family. As to quaternary structure, component of the eukaryotic translation initiation factor 3 (eIF-3) complex, which is composed of 13 subunits: EIF3A, EIF3B, EIF3C, EIF3D, EIF3E, EIF3F, EIF3G, EIF3H, EIF3I, EIF3J, EIF3K, EIF3L and EIF3M.

It localises to the cytoplasm. Functionally, component of the eukaryotic translation initiation factor 3 (eIF-3) complex, which is involved in protein synthesis of a specialized repertoire of mRNAs and, together with other initiation factors, stimulates binding of mRNA and methionyl-tRNAi to the 40S ribosome. The eIF-3 complex specifically targets and initiates translation of a subset of mRNAs involved in cell proliferation. The protein is Eukaryotic translation initiation factor 3 subunit I of Taeniopygia guttata (Zebra finch).